The following is a 298-amino-acid chain: Mimecan (298 aa).

Positions 1-20 are cleaved as a signal peptide; sequence MKTLQSTLLLLLFVPLIKPA. Asn-88 carries N-linked (GlcNAc...) (keratan sulfate) asparagine glycosylation. 7 LRR repeats span residues 112–131, 132–155, 156–179, 180–199, 200–225, 226–246, and 247–277; these read DAVP…FNKI, KKLT…GNLI, EDIE…ENQL, LKLP…YNKI, KSRG…HNAL, ESVP…FNNI, and ASIT…GNPI. An N-linked (GlcNAc...) (keratan sulfate) asparagine glycan is attached at Asn-214. A disulfide bridge links Cys-255 with Cys-288. The N-linked (GlcNAc...) (keratan sulfate) asparagine glycan is linked to Asn-258.

This sequence belongs to the small leucine-rich proteoglycan (SLRP) family. SLRP class III subfamily. Post-translationally, contains keratan sulfate.

The protein localises to the secreted. The protein resides in the extracellular space. Its subcellular location is the extracellular matrix. In terms of biological role, induces bone formation in conjunction with TGF-beta-1 or TGF-beta-2. The polypeptide is Mimecan (OGN) (Pongo abelii (Sumatran orangutan)).